The following is a 195-amino-acid chain: AISITCEGSDALLQCDGAKIHIKRANYGRRQHDVCSIGRPDNQLTDTNCLSQSSTSKMAERCGGKSECIVPASNFVFGDPCVGTYKYLDTKYSCVQQQETISSIICEGSDSQLLCDRGEIRIQRANYGRRQHDVCSIGRPHQQLKNTNCLSQSTTSKMAERCDGKRQCIVSVSNSVFGDPCVGTYKYLDVAYTCD.

SUEL-type lectin domains lie at 1–95 and 105–195; these read AISI…YSCV and ICEG…YTCD.

L-rhamnose binding lectin. Has hemagglutinating activity towards rabbit erythrocytes, human type A erythrocytes, human type B erythrocytes, human type O erythrocytes and sheep erythrocytes. Hemagglutinating activity is inhibited by smooth-type lipopolysaccharide (LPS) from S.flexneri 1A, A.salmonicida and E.coli K12, but not by rough-type LPS from S.flexneri, E.coli K12 and E.coli EH100. Agglutinates E.coli K12 and B.subtilis. The polypeptide is L-rhamnose-binding lectin CSL3 (Oncorhynchus keta (Chum salmon)).